Consider the following 247-residue polypeptide: NAD(P)H-quinone oxidoreductase subunit K, chloroplastic (247 aa).

[4Fe-4S] cluster is bound by residues Cys-64, Cys-65, Cys-129, and Cys-160.

Belongs to the complex I 20 kDa subunit family. NDH is composed of at least 16 different subunits, 5 of which are encoded in the nucleus. It depends on [4Fe-4S] cluster as a cofactor.

The protein localises to the plastid. It localises to the chloroplast thylakoid membrane. It carries out the reaction a plastoquinone + NADH + (n+1) H(+)(in) = a plastoquinol + NAD(+) + n H(+)(out). It catalyses the reaction a plastoquinone + NADPH + (n+1) H(+)(in) = a plastoquinol + NADP(+) + n H(+)(out). Its function is as follows. NDH shuttles electrons from NAD(P)H:plastoquinone, via FMN and iron-sulfur (Fe-S) centers, to quinones in the photosynthetic chain and possibly in a chloroplast respiratory chain. The immediate electron acceptor for the enzyme in this species is believed to be plastoquinone. Couples the redox reaction to proton translocation, and thus conserves the redox energy in a proton gradient. This Mesostigma viride (Green alga) protein is NAD(P)H-quinone oxidoreductase subunit K, chloroplastic.